A 125-amino-acid chain; its full sequence is Calcitonin receptor-stimulating peptide 1 (125 aa).

Positions 1-25 (MGFWKFPPFLVLSILVLYQAGMFHA) are cleaved as a signal peptide. Positions 26-77 (APFRSVFDGRFDPATLDEEESRLLLAAMVNDYEQMRARESEKAQKTEGSRIQ) are excised as a propeptide. C81 and C86 are joined by a disulfide.

Belongs to the calcitonin family.

Its subcellular location is the secreted. In terms of biological role, stimulates cAMP production in porcine kidney cell line LLC-PK1 via the calcitonin receptor (CT) but not via the CT-like (CL) receptor. This Bos taurus (Bovine) protein is Calcitonin receptor-stimulating peptide 1 (CRSP1).